Here is a 194-residue protein sequence, read N- to C-terminus: Rho-related protein racC (194 aa).

13 residues coordinate GTP: Ala-17, Gly-19, Lys-20, Thr-21, Cys-22, Glu-34, Tyr-36, Thr-39, Gly-64, Lys-120, Asp-122, Ala-163, and Lys-164. A Mg(2+)-binding site is contributed by Thr-21. Short sequence motifs (switch) lie at residues 30–41 and 61–79; these read RKFPEDYIPTVF and DTAG…YSSA. Thr-39 lines the Mg(2+) pocket. Cys-191 is modified (cysteine methyl ester). Cys-191 carries the S-geranylgeranyl cysteine lipid modification. Positions 192 to 194 are cleaved as a propeptide — removed in mature form; that stretch reads ALL.

This sequence belongs to the small GTPase superfamily. Rho family. In terms of assembly, interacts (GTP-bound form) with PAK4 (via CRIB domain). Interacts (GTP-bound form) with PAK5 (via CRIB domain). Mg(2+) is required as a cofactor.

It localises to the cell membrane. It is found in the cytoplasm. The protein resides in the cytoskeleton. The enzyme catalyses GTP + H2O = GDP + phosphate + H(+). Its activity is regulated as follows. Regulated by guanine nucleotide exchange factors (GEFs) which promote the exchange of bound GDP for free GTP, GTPase activating proteins (GAPs) which increase the GTP hydrolysis activity, and GDP dissociation inhibitors which inhibit the dissociation of the nucleotide from the GTPase. In terms of biological role, small GTPase which cycles between active GTP-bound and inactive GDP-bound states. The polypeptide is Rho-related protein racC (Entamoeba histolytica (strain ATCC 30459 / HM-1:IMSS / ABRM)).